The following is a 654-amino-acid chain: Smc-like protein Sph3 (654 aa).

2 coiled-coil regions span residues 135-290 (TDAI…LQTV) and 341-503 (IRGT…LTAA).

Belongs to the Sph1/Sph2 family.

In terms of biological role, involved in cell-shape determination. Required for the formation of rods and wild-type-like motility. This chain is Smc-like protein Sph3, found in Haloferax volcanii (strain ATCC 29605 / DSM 3757 / JCM 8879 / NBRC 14742 / NCIMB 2012 / VKM B-1768 / DS2) (Halobacterium volcanii).